The chain runs to 1071 residues: Carbamoyl phosphate synthase large chain (1071 aa).

Residues 1-403 (MPKRTDLKSI…SFQKALRGLE (403 aa)) form a carboxyphosphate synthetic domain region. Arg-129, Arg-169, Gly-175, Gly-176, Gln-208, Val-210, Glu-215, Gly-241, Val-242, His-243, Gln-285, and Glu-299 together coordinate ATP. An ATP-grasp 1 domain is found at 133–328 (KEAMEKIGLS…IAKVAAKLAV (196 aa)). Residues Gln-285, Glu-299, and Asn-301 each contribute to the Mg(2+) site. Residues Gln-285, Glu-299, and Asn-301 each contribute to the Mn(2+) site. An oligomerization domain region spans residues 404 to 548 (TGLCGFNPRS…YSTYEEECES (145 aa)). Positions 549–930 (RPSDRKKVMI…AYYKAQLGAG (382 aa)) are carbamoyl phosphate synthetic domain. Residues 673–864 (QKVLNDLGLR…LAKVGARCMA (192 aa)) form the ATP-grasp 2 domain. ATP is bound by residues Arg-709, Phe-748, Leu-750, Glu-755, Gly-780, Ile-781, His-782, Ser-783, Gln-823, and Glu-835. Positions 823, 835, and 837 each coordinate Mg(2+). Residues Gln-823, Glu-835, and Asn-837 each contribute to the Mn(2+) site. Residues 931 to 1071 (ERLNPTGKIF…ELHGRLKNRN (141 aa)) enclose the MGS-like domain. Residues 931–1071 (ERLNPTGKIF…ELHGRLKNRN (141 aa)) form an allosteric domain region.

The protein belongs to the CarB family. In terms of assembly, composed of two chains; the small (or glutamine) chain promotes the hydrolysis of glutamine to ammonia, which is used by the large (or ammonia) chain to synthesize carbamoyl phosphate. Tetramer of heterodimers (alpha,beta)4. Mg(2+) serves as cofactor. Mn(2+) is required as a cofactor.

The enzyme catalyses hydrogencarbonate + L-glutamine + 2 ATP + H2O = carbamoyl phosphate + L-glutamate + 2 ADP + phosphate + 2 H(+). It catalyses the reaction hydrogencarbonate + NH4(+) + 2 ATP = carbamoyl phosphate + 2 ADP + phosphate + 2 H(+). Its pathway is amino-acid biosynthesis; L-arginine biosynthesis; carbamoyl phosphate from bicarbonate: step 1/1. It participates in pyrimidine metabolism; UMP biosynthesis via de novo pathway; (S)-dihydroorotate from bicarbonate: step 1/3. Its function is as follows. Large subunit of the glutamine-dependent carbamoyl phosphate synthetase (CPSase). CPSase catalyzes the formation of carbamoyl phosphate from the ammonia moiety of glutamine, carbonate, and phosphate donated by ATP, constituting the first step of 2 biosynthetic pathways, one leading to arginine and/or urea and the other to pyrimidine nucleotides. The large subunit (synthetase) binds the substrates ammonia (free or transferred from glutamine from the small subunit), hydrogencarbonate and ATP and carries out an ATP-coupled ligase reaction, activating hydrogencarbonate by forming carboxy phosphate which reacts with ammonia to form carbamoyl phosphate. In Neisseria meningitidis serogroup B (strain ATCC BAA-335 / MC58), this protein is Carbamoyl phosphate synthase large chain.